The sequence spans 236 residues: tRNA1(Val) (adenine(37)-N6)-methyltransferase (236 aa).

This sequence belongs to the methyltransferase superfamily. tRNA (adenine-N(6)-)-methyltransferase family.

It localises to the cytoplasm. The enzyme catalyses adenosine(37) in tRNA1(Val) + S-adenosyl-L-methionine = N(6)-methyladenosine(37) in tRNA1(Val) + S-adenosyl-L-homocysteine + H(+). Functionally, specifically methylates the adenine in position 37 of tRNA(1)(Val) (anticodon cmo5UAC). The chain is tRNA1(Val) (adenine(37)-N6)-methyltransferase from Actinobacillus succinogenes (strain ATCC 55618 / DSM 22257 / CCUG 43843 / 130Z).